The following is a 240-amino-acid chain: MKMMDANEIISFIQNSEKKTPVKVYIKGDLKEVTFPETVQAFVNKKSGVLFGEWSEIKTILDENNKHIVDYVVENDRRNSAIPMLDLKGIKARIEPGAIIRDHVEIGDNAVIMMNATINIGAVIGEGTMIDMNAVLGGRATVGKNCHVGAGAVLAGVIEPPSAKPVIVEDDVVIGANVVVLEGVTVGKGAVVAAGAVVTEDVPPYTVVAGTPARVIKEIDEKTKAKTEIKQELRQLNPEK.

The protein belongs to the transferase hexapeptide repeat family. DapH subfamily.

It catalyses the reaction (S)-2,3,4,5-tetrahydrodipicolinate + acetyl-CoA + H2O = L-2-acetamido-6-oxoheptanedioate + CoA. It participates in amino-acid biosynthesis; L-lysine biosynthesis via DAP pathway; LL-2,6-diaminopimelate from (S)-tetrahydrodipicolinate (acetylase route): step 1/3. Catalyzes the transfer of an acetyl group from acetyl-CoA to tetrahydrodipicolinate. The polypeptide is 2,3,4,5-tetrahydropyridine-2,6-dicarboxylate N-acetyltransferase (Bacillus mycoides (strain KBAB4) (Bacillus weihenstephanensis)).